The following is a 562-amino-acid chain: Gut esterase 1 (562 aa).

An N-terminal signal peptide occupies residues 1-16; the sequence is MRIFLVSVILINACWA. The N-linked (GlcNAc...) asparagine; atypical glycan is linked to Asn-73. Residues Cys-75 and Cys-93 are joined by a disulfide bond. Ser-198 functions as the Acyl-ester intermediate in the catalytic mechanism. Cys-250 and Cys-258 are disulfide-bonded. Catalysis depends on charge relay system residues Glu-319 and His-452. The short motif at 559–562 is the Prevents secretion from ER element; the sequence is KDEL.

The protein belongs to the type-B carboxylesterase/lipase family. In terms of tissue distribution, expressed only in the intestine.

It is found in the endoplasmic reticulum lumen. It carries out the reaction a carboxylic ester + H2O = an alcohol + a carboxylate + H(+). The sequence is that of Gut esterase 1 (ges-1) from Caenorhabditis elegans.